The following is a 178-amino-acid chain: Large ribosomal subunit protein uL5 (178 aa).

It belongs to the universal ribosomal protein uL5 family. Part of the 50S ribosomal subunit; part of the 5S rRNA/L5/L18/L25 subcomplex. Contacts the 5S rRNA and the P site tRNA. Forms a bridge to the 30S subunit in the 70S ribosome.

In terms of biological role, this is one of the proteins that bind and probably mediate the attachment of the 5S RNA into the large ribosomal subunit, where it forms part of the central protuberance. In the 70S ribosome it contacts protein S13 of the 30S subunit (bridge B1b), connecting the 2 subunits; this bridge is implicated in subunit movement. Contacts the P site tRNA; the 5S rRNA and some of its associated proteins might help stabilize positioning of ribosome-bound tRNAs. The protein is Large ribosomal subunit protein uL5 of Wigglesworthia glossinidia brevipalpis.